The chain runs to 446 residues: Putative RNA-ligase (446 aa).

It belongs to the asfivirus M448R family.

The protein localises to the virion. The polypeptide is Putative RNA-ligase (African swine fever virus (isolate Tick/Malawi/Lil 20-1/1983) (ASFV)).